The primary structure comprises 1233 residues: NACHT, LRR and PYD domains-containing protein 1b allele 1 (1233 aa).

The interval 1 to 22 is disordered; the sequence is MEESPPKQKSNTKVAQHEGQQD. An NACHT domain is found at 126–435; sequence QLVIIEGAAG…EFFAAISCIL (310 aa). An ATP-binding site is contributed by 132 to 139; that stretch reads GAAGIGKS. LRR repeat units lie at residues 627–647 and 684–704; these read NLEGLDLSGNSLRYSVVQSLC and SLTELYLQLNDLGDDGVRMLC. The segment at 850-983 is ZU5; it reads FWGPIGPVAT…GYTVLKNPSF (134 aa). The region spanning 850-1133 is the FIIND domain; that stretch reads FWGPIGPVAT…LRPALPRIAQ (284 aa). Residues 984–1133 are UPA; it reads SPMGVVLRII…LRPALPRIAQ (150 aa). A CARD domain is found at 1143–1226; sequence HFMDQHREQL…HLVMDLLEKS (84 aa).

The protein belongs to the NLRP family. As to quaternary structure, interacts with DPP9; leading to inhibit activation of the inflammasome. DPP9 acts via formation of a ternary complex, composed of a DPP9 homodimer, one full-length Nlrp1b protein, and one cleaved C-terminus of Nlrp1b (NACHT, LRR and PYD domains-containing protein 1b, C-terminus). Interacts with DPP8; leading to inhibit activation of the inflammasome, probably via formation of a ternary complex with DPP8. Interacts (via LRR repeats) with BCL2 and BCL2L1 (via the loop between motifs BH4 and BH3). Interacts with NOD2; this interaction may increase IL1B release. Interacts with EIF2AK2/PKR; this interaction requires EIF2AK2 activity, is accompanied by EIF2AK2 autophosphorylation and promotes inflammasome assembly in response to B.anthracis lethal toxin. Interacts with MEFV; this interaction targets Nlrp1b to degradation by autophagy, hence preventing excessive IL1B- and IL18-mediated inflammation. In terms of assembly, interacts with the C-terminal part of Nlrp1b (NACHT, LRR and PYD domains-containing protein 1b, C-terminus) in absence of pathogens and other damage-associated signals. Interacts with the N-terminal part of Nlrp1b (NACHT, LRR and PYD domains-containing protein 1b, N-terminus) in absence of pathogens and other damage-associated signals. Homomultimer; forms the Nlrp1b inflammasome polymeric complex, a filament composed of homopolymers of this form in response to pathogens and other damage-associated signals. The Nlrp1b inflammasome polymeric complex directly recruits pro-caspase-1 (proCASP1) independently of PYCARD/ASC. Interacts (via CARD domain) with CASP1 (via CARD domain); leading to CASP1 activation. Post-translationally, autocatalytically cleaved. Autocatalytic cleavage in FIIND region occurs constitutively, prior to activation signals, and is required for inflammasome activity (IL1B release), possibly by facilitating CASP1 binding. Both N- and C-terminal parts remain associated non-covalently. In terms of processing, ubiquitinated by UBR2, a component of the N-end rule pathway in response to pathogens and other damage-associated signals, leading to its degradation by the proteasome and subsequent release of the cleaved C-terminal part of the protein (NACHT, LRR and PYD domains-containing protein 1b, C-terminus), which polymerizes and forms the Nlrp1b inflammasome. (Microbial infection) Cleavage by B.anthracis lethal toxin (LT) endopeptidase promotes ubiquitination and degradation of the N-terminal part, releasing the cleaved C-terminal part of the protein (NACHT, LRR and PYD domains-containing protein 1b, C-terminus), which polymerizes and forms the Nlrp1b inflammasome. Post-translationally, (Microbial infection) Ubiquitinated by S.flexneri IpaH7.8, leading to its degradation by the proteasome and subsequent release of the cleaved C-terminal part of the protein (NACHT, LRR and PYD domains-containing protein 1b, C-terminus), which polymerizes and forms the Nlrp1b inflammasome. Widely expressed, including in macrophages.

The protein resides in the cytoplasm. It localises to the cytosol. It is found in the membrane. The protein localises to the inflammasome. Its activity is regulated as follows. Activated by cleavage by B.anthracis lethal toxin (LT) endopeptidase: cleavage by LT promotes ubiquitination and degradation of the N-terminal part, releasing the cleaved C-terminal part of the protein (NACHT, LRR and PYD domains-containing protein 1b, C-terminus), which polymerizes and forms the Nlrp1b inflammasome. Activated by S.flexneri IpaH7.8, an E3 ubiquitin ligase that mediates ubiquitination and degradation of the N-terminal part, releasing the cleaved C-terminal part of the protein, which polymerizes and forms the Nlrp1b inflammasome. Nlrp1b inflammasome is inhibited by DPP8 and DPP9, which sequester the C-terminal fragment of Nlrp1b (NACHT, LRR and PYD domains-containing protein 1b, C-terminus) in a ternary complex, thereby preventing Nlrp1b oligomerization and activation. Nlrp1b inflammasome is activated by Val-boroPro (Talabostat, PT-100), an inhibitor of dipeptidyl peptidases DPP8 and DPP9. Val-boroPro relieves inhibition of DPP8 and/or DPP9 by promoting disruption of the ternary complex, releasing its C-terminal part from autoinhibition. Activated by metabolic inhibitors, such as 2-deoxy-D-glucose and sodium azide, by nutrient deprivation and hypoxia, possibly due to a decrease in cytosolic ATP. Also activated by Toxoplasma gondii. Not activated by muramyl dipeptide, nor by full-length bacterial peptidoglycan. Contrary to its human ortholog, not activated by positive-strand RNA virus such as Semliki Forrest virus or long dsRNA. Its function is as follows. Acts as the sensor component of the Nlrp1b inflammasome, which mediates inflammasome activation in response to various pathogen-associated signals, leading to subsequent pyroptosis. Inflammasomes are supramolecular complexes that assemble in the cytosol in response to pathogens and other damage-associated signals and play critical roles in innate immunity and inflammation. Acts as a recognition receptor (PRR): recognizes specific pathogens and other damage-associated signals, such as B.anthracis lethal toxin (LT) or Val-boroPro inhibitor, and mediates the formation of the inflammasome polymeric complex. In response to pathogen-associated signals, the N-terminal part of Nlrp1b is degraded by the proteasome, releasing the cleaved C-terminal part of the protein (NACHT, LRR and PYD domains-containing protein 1b, C-terminus), which polymerizes to initiate the formation of the inflammasome complex: the inflammasome directly recruits pro-caspase-1 (proCASP1) independently of PYCARD/ASC and promotes caspase-1 (CASP1) activation, which subsequently cleaves and activates inflammatory cytokines IL1B and IL18 and gasdermin-D (GSDMD), leading to pyroptosis. In the absence of GSDMD expression, the Nlrp1b inflammasome is able to recruit and activate CASP8, leading to activation of gasdermin-E (GSDME). Activation of Nlrp1b inflammasome is also required for HMGB1 secretion; the active cytokines and HMGB1 stimulate inflammatory responses. Primary mediator of macrophage susceptibility to B.anthracis LT: in response to B.anthracis infection, macrophages and dendritic cells release IL1B and undergo pyroptosis. This early inflammatory response to the toxin increases resistance to infection by B.anthracis spores. Constitutes the precursor of the Nlrp1b inflammasome, which mediates autoproteolytic processing within the FIIND domain to generate the N-terminal and C-terminal parts, which are associated non-covalently in absence of pathogens and other damage-associated signals. In terms of biological role, regulatory part that prevents formation of the Nlrp1b inflammasome: in absence of pathogens and other damage-associated signals, interacts with the C-terminal part of Nlrp1b (NACHT, LRR and PYD domains-containing protein 1b, C-terminus), preventing activation of the Nlrp1b inflammasome. In response to pathogen-associated signals, this part is ubiquitinated by the N-end rule pathway and degraded by the proteasome, releasing the cleaved C-terminal part of the protein, which polymerizes and forms the Nlrp1b inflammasome. Functionally, constitutes the active part of the Nlrp1b inflammasome. In absence of pathogens and other damage-associated signals, interacts with the N-terminal part of Nlrp1b (NACHT, LRR and PYD domains-containing protein 1b, N-terminus), preventing activation of the Nlrp1b inflammasome. In response to pathogen-associated signals, the N-terminal part of Nlrp1b is degraded by the proteasome, releasing this form, which polymerizes to form the Nlrp1b inflammasome complex: the Nlrp1b inflammasome complex then directly recruits pro-caspase-1 (proCASP1) and promotes caspase-1 (CASP1) activation, leading to gasdermin-D (GSDMD) cleavage and subsequent pyroptosis. The sequence is that of NACHT, LRR and PYD domains-containing protein 1b allele 1 from Mus musculus (Mouse).